The following is an 828-amino-acid chain: Glycerol-3-phosphate acyltransferase (828 aa).

Positions cysteine 309 to isoleucine 314 match the HXXXXD motif motif.

It belongs to the GPAT/DAPAT family.

It is found in the cell inner membrane. The enzyme catalyses sn-glycerol 3-phosphate + an acyl-CoA = a 1-acyl-sn-glycero-3-phosphate + CoA. Its pathway is phospholipid metabolism; CDP-diacylglycerol biosynthesis; CDP-diacylglycerol from sn-glycerol 3-phosphate: step 1/3. The sequence is that of Glycerol-3-phosphate acyltransferase from Pseudomonas putida (strain W619).